A 264-amino-acid polypeptide reads, in one-letter code: Proteasome subunit beta type-5 (264 aa).

The propeptide at 1–59 (MALASVLQRPMPVNQHGFFGLGGGADLLDLGPGSPGDGLSLAAPSWGVPEEPRIEMLHG) is removed in mature form. Thr-60 serves as the catalytic Nucleophile. Residue Ala-108 participates in bortezomib binding.

This sequence belongs to the peptidase T1B family. The 26S proteasome consists of a 20S proteasome core and two 19S regulatory subunits. The 20S proteasome core is a barrel-shaped complex made of 28 subunits that are arranged in four stacked rings. The two outer rings are each formed by seven alpha subunits, and the two inner rings are formed by seven beta subunits. The proteolytic activity is exerted by three beta-subunits PSMB5, PSMB6 and PSMB7. Directly interacts with POMP. Interacts with ABCB1 and TAP1. Expressed in uterus at the embryo implantation site.

The protein localises to the cytoplasm. The protein resides in the nucleus. The enzyme catalyses Cleavage of peptide bonds with very broad specificity.. Its function is as follows. Component of the 20S core proteasome complex involved in the proteolytic degradation of most intracellular proteins. This complex plays numerous essential roles within the cell by associating with different regulatory particles. Associated with two 19S regulatory particles, forms the 26S proteasome and thus participates in the ATP-dependent degradation of ubiquitinated proteins. The 26S proteasome plays a key role in the maintenance of protein homeostasis by removing misfolded or damaged proteins that could impair cellular functions, and by removing proteins whose functions are no longer required. Associated with the PA200 or PA28, the 20S proteasome mediates ubiquitin-independent protein degradation. This type of proteolysis is required in several pathways including spermatogenesis (20S-PA200 complex) or generation of a subset of MHC class I-presented antigenic peptides (20S-PA28 complex). Within the 20S core complex, PSMB5 displays a chymotrypsin-like activity. The protein is Proteasome subunit beta type-5 (Psmb5) of Mus musculus (Mouse).